The following is a 322-amino-acid chain: uncharacterized protein (322 aa).

Transmembrane regions (helical) follow at residues 24–44, 68–88, 100–120, and 125–145; these read LLHL…IQIT, LFFE…LIFI, IVTS…TPTF, and VQLI…MPSL.

Its subcellular location is the cell membrane. This is an uncharacterized protein from Bacillus subtilis (strain 168).